The sequence spans 438 residues: UDP-N-acetylmuramoylalanine--D-glutamate ligase (438 aa).

Position 112-118 (112-118 (GSNGKST)) interacts with ATP.

This sequence belongs to the MurCDEF family.

The protein resides in the cytoplasm. It carries out the reaction UDP-N-acetyl-alpha-D-muramoyl-L-alanine + D-glutamate + ATP = UDP-N-acetyl-alpha-D-muramoyl-L-alanyl-D-glutamate + ADP + phosphate + H(+). It functions in the pathway cell wall biogenesis; peptidoglycan biosynthesis. In terms of biological role, cell wall formation. Catalyzes the addition of glutamate to the nucleotide precursor UDP-N-acetylmuramoyl-L-alanine (UMA). The chain is UDP-N-acetylmuramoylalanine--D-glutamate ligase from Pectobacterium atrosepticum (strain SCRI 1043 / ATCC BAA-672) (Erwinia carotovora subsp. atroseptica).